The sequence spans 449 residues: Bifunctional protein GlmU (449 aa).

Residues 1-226 form a pyrophosphorylase region; the sequence is MVAVAILAAG…FQEISGINDR (226 aa). UDP-N-acetyl-alpha-D-glucosamine-binding positions include 7–10, lysine 21, glutamine 73, and 78–79; these read LAAG and GT. A Mg(2+)-binding site is contributed by aspartate 103. UDP-N-acetyl-alpha-D-glucosamine is bound by residues glycine 140, glutamate 155, asparagine 170, and asparagine 224. Residue asparagine 224 coordinates Mg(2+). The linker stretch occupies residues 227 to 247; that stretch reads FQLSAAYEILQDRIKEKWMKA. Positions 248 to 449 are N-acetyltransferase; sequence GVMIHQPDTV…KEIKGWRLQS (202 aa). Residues arginine 329 and lysine 347 each contribute to the UDP-N-acetyl-alpha-D-glucosamine site. Histidine 359 acts as the Proton acceptor in catalysis. Positions 362 and 373 each coordinate UDP-N-acetyl-alpha-D-glucosamine. Acetyl-CoA contacts are provided by residues alanine 376, 382–383, alanine 419, and arginine 436; that span reads NY.

It in the N-terminal section; belongs to the N-acetylglucosamine-1-phosphate uridyltransferase family. The protein in the C-terminal section; belongs to the transferase hexapeptide repeat family. Homotrimer. Mg(2+) serves as cofactor.

Its subcellular location is the cytoplasm. The enzyme catalyses alpha-D-glucosamine 1-phosphate + acetyl-CoA = N-acetyl-alpha-D-glucosamine 1-phosphate + CoA + H(+). The catalysed reaction is N-acetyl-alpha-D-glucosamine 1-phosphate + UTP + H(+) = UDP-N-acetyl-alpha-D-glucosamine + diphosphate. It participates in nucleotide-sugar biosynthesis; UDP-N-acetyl-alpha-D-glucosamine biosynthesis; N-acetyl-alpha-D-glucosamine 1-phosphate from alpha-D-glucosamine 6-phosphate (route II): step 2/2. It functions in the pathway nucleotide-sugar biosynthesis; UDP-N-acetyl-alpha-D-glucosamine biosynthesis; UDP-N-acetyl-alpha-D-glucosamine from N-acetyl-alpha-D-glucosamine 1-phosphate: step 1/1. The protein operates within bacterial outer membrane biogenesis; LPS lipid A biosynthesis. Its function is as follows. Catalyzes the last two sequential reactions in the de novo biosynthetic pathway for UDP-N-acetylglucosamine (UDP-GlcNAc). The C-terminal domain catalyzes the transfer of acetyl group from acetyl coenzyme A to glucosamine-1-phosphate (GlcN-1-P) to produce N-acetylglucosamine-1-phosphate (GlcNAc-1-P), which is converted into UDP-GlcNAc by the transfer of uridine 5-monophosphate (from uridine 5-triphosphate), a reaction catalyzed by the N-terminal domain. The protein is Bifunctional protein GlmU of Picosynechococcus sp. (strain ATCC 27264 / PCC 7002 / PR-6) (Agmenellum quadruplicatum).